The following is a 264-amino-acid chain: Small ribosomal subunit protein eS1 (264 aa).

Residues 232-264 (HGEGGGAGKPSGDEAGTKVERADGYEPPVQESV) are disordered. Positions 242–255 (SGDEAGTKVERADG) are enriched in basic and acidic residues.

It belongs to the eukaryotic ribosomal protein eS1 family. As to quaternary structure, component of the small ribosomal subunit. Mature ribosomes consist of a small (40S) and a large (60S) subunit. The 40S subunit contains about 33 different proteins and 1 molecule of RNA (18S). The 60S subunit contains about 49 different proteins and 3 molecules of RNA (28S, 5.8S and 5S). Part of the small subunit (SSU) processome, composed of more than 70 proteins and the RNA chaperone small nucleolar RNA (snoRNA) U3.

It localises to the cytoplasm. The protein resides in the nucleus. Its subcellular location is the nucleolus. Its function is as follows. Component of the small ribosomal subunit. The ribosome is a large ribonucleoprotein complex responsible for the synthesis of proteins in the cell. Part of the small subunit (SSU) processome, first precursor of the small eukaryotic ribosomal subunit. During the assembly of the SSU processome in the nucleolus, many ribosome biogenesis factors, an RNA chaperone and ribosomal proteins associate with the nascent pre-rRNA and work in concert to generate RNA folding, modifications, rearrangements and cleavage as well as targeted degradation of pre-ribosomal RNA by the RNA exosome. May play a role during erythropoiesis. In Taeniopygia guttata (Zebra finch), this protein is Small ribosomal subunit protein eS1.